The sequence spans 235 residues: Large ribosomal subunit protein uL1 (235 aa).

Belongs to the universal ribosomal protein uL1 family. As to quaternary structure, part of the 50S ribosomal subunit.

In terms of biological role, binds directly to 23S rRNA. The L1 stalk is quite mobile in the ribosome, and is involved in E site tRNA release. Protein L1 is also a translational repressor protein, it controls the translation of the L11 operon by binding to its mRNA. This Solidesulfovibrio magneticus (strain ATCC 700980 / DSM 13731 / RS-1) (Desulfovibrio magneticus) protein is Large ribosomal subunit protein uL1.